A 440-amino-acid polypeptide reads, in one-letter code: MLAVRRLTRYTFLKRTHPVLYTRRAYKILPSRSTFLRRSLLQTQLHSKMTAHTNIKQHKHCHEDHPIRRSDSAVSIVHLKRAPFKVTVIGSGNWGTTIAKVIAENTELHSHIFEPEVRMWVFDEKIGDENLTDIINTRHQNVKYLPNIDLPHNLVADPDLLHSIKGADILVFNIPHQFLPNIVKQLQGHVAPHVRAISCLKGFELGSKGVQLLSSYVTDELGIQCGALSGANLAPEVAKEHWSETTVAYQLPKDYQGDGKDVDHKILKLLFHRPYFHVNVIDDVAGISIAGALKNVVALACGFVEGMGWGNNASAAIQRLGLGEIIKFGRMFFPESKVETYYQESAGVADLITTCSGGRNVKVATYMAKTGKSALEAEKELLNGQSAQGIITCREVHEWLQTCELTQEFPLFEAVYQIVYNNVRMEDLPEMIEELDIDDE.

A mitochondrion-targeting transit peptide spans methionine 1–threonine 16. Phosphoserine occurs at positions 70, 72, and 75. NAD(+) contacts are provided by residues glycine 90–glycine 95, phenylalanine 122, and phenylalanine 178. Residue lysine 201 participates in substrate binding. NAD(+) is bound at residue alanine 234. The Proton acceptor role is filled by lysine 294. NAD(+) contacts are provided by arginine 359 and glutamine 388. Arginine 359–asparagine 360 is a substrate binding site.

It belongs to the NAD-dependent glycerol-3-phosphate dehydrogenase family.

The protein localises to the cytoplasm. It localises to the mitochondrion. The catalysed reaction is sn-glycerol 3-phosphate + NAD(+) = dihydroxyacetone phosphate + NADH + H(+). In terms of biological role, catalyzes the production of glycerol under anaerobic growth conditions. Glycerol production serves as a redox sink by consuming the excess cytosolic NADH during anaerobic metabolism. The chain is Glycerol-3-phosphate dehydrogenase [NAD(+)] 2, mitochondrial from Saccharomyces cerevisiae (strain ATCC 204508 / S288c) (Baker's yeast).